A 368-amino-acid polypeptide reads, in one-letter code: N-acetylneuraminate epimerase (368 aa).

A signal peptide spans 1-19; the sequence is MNKTITALAIMMASFAANA. Kelch repeat units lie at residues 40 to 84, 86 to 137, 139 to 173, 174 to 219, 222 to 265, 287 to 336, and 338 to 367; these read TVYI…AFID, NLYV…FVHN, KAYVTGGVNQNIFNGYFEDLNEAGKDSTAVDKINA, YYFD…VNKG, TWLI…VAGG, ENYQ…PWNN, and LLIIGGETAGGKAVTDSVLISVKDNKVTVQ. The active-site Proton acceptor is the Glu228.

The protein belongs to the NanM family. Homodimer.

The protein localises to the periplasm. The catalysed reaction is N-acetyl-alpha-neuraminate = N-acetyl-beta-neuraminate. Its function is as follows. Converts alpha-N-acetylneuranimic acid (Neu5Ac) to the beta-anomer, accelerating the equilibrium between the alpha- and beta-anomers. Probably facilitates sialidase-negative bacteria to compete successfully for limited amounts of extracellular Neu5Ac, which is likely taken up in the beta-anomer. In addition, the rapid removal of sialic acid from solution might be advantageous to the bacterium to damp down host responses. This is N-acetylneuraminate epimerase from Shigella boydii serotype 4 (strain Sb227).